The primary structure comprises 473 residues: MTKENWETVIGLEVHAQVSSKTKLFSSSLTEFGTEHNTQVSLVDAAMPGTLPILNYFCIEQAICTGLAISAEINKCSYFDRKNYFYPDLPQGYQITQFFEPIVKNGKVFINNNEKEIRIARIHLEQDAGKSIHEESKTYVDLNRAGVALMEIVSEPDLRSSAEAAEFMKKLRQILRYIGSCDGDMEKGSLRCDANVSVRPNGSSAFGTRCEIKNLNSIRYIVQAIDYEAQRQIKILESGGEISQDTLLFDVTLGKTKVMRSKEDSSDYRYFPEPDLLPVEISQDKIDSIKSSLPELPDQKKLRYINELGINEYDADVITSDKATADYFEELIKKHDSKIAVTWLTVELFGRLNKANIDIVSSPIKADALSELLDFIVDGTISAKLGKQVFDIMFETGKPASLIIEEQDLKQITDRDQISEIIDTIVNNNQDKVQEYKSGKTKLYGFFVGEVMKSTKGKASPDVVNLVLSERLG.

The protein belongs to the GatB/GatE family. GatB subfamily. Heterotrimer of A, B and C subunits.

The enzyme catalyses L-glutamyl-tRNA(Gln) + L-glutamine + ATP + H2O = L-glutaminyl-tRNA(Gln) + L-glutamate + ADP + phosphate + H(+). It catalyses the reaction L-aspartyl-tRNA(Asn) + L-glutamine + ATP + H2O = L-asparaginyl-tRNA(Asn) + L-glutamate + ADP + phosphate + 2 H(+). Its function is as follows. Allows the formation of correctly charged Asn-tRNA(Asn) or Gln-tRNA(Gln) through the transamidation of misacylated Asp-tRNA(Asn) or Glu-tRNA(Gln) in organisms which lack either or both of asparaginyl-tRNA or glutaminyl-tRNA synthetases. The reaction takes place in the presence of glutamine and ATP through an activated phospho-Asp-tRNA(Asn) or phospho-Glu-tRNA(Gln). The protein is Aspartyl/glutamyl-tRNA(Asn/Gln) amidotransferase subunit B of Wolbachia pipientis subsp. Culex pipiens (strain wPip).